The primary structure comprises 323 residues: Transcription factor MafB (323 aa).

Lys32 participates in a covalent cross-link: Glycyl lysine isopeptide (Lys-Gly) (interchain with G-Cter in SUMO). The segment covering 34-43 (EPLGRAERPG) has biased composition (basic and acidic residues). Disordered stretches follow at residues 34 to 78 (EPLG…PTEP) and 116 to 210 (PVPQ…VEDR). Positions 54-77 (SVSSTPLSTPCSSVPSSPSFSPTE) are enriched in low complexity. 2 stretches are compositionally biased toward basic residues: residues 129–143 (SAHH…HPHH) and 159–168 (AHPHHHHHHQ). Residues 192-201 (PHATAAATAA) show a composition bias toward low complexity. Residues 238 to 263 (RLKQKRRTLKNRGYAQSCRYKRVQQK) form a basic motif region. In terms of domain architecture, bZIP spans 238–301 (RLKQKRRTLK…DAYKVKCEKL (64 aa)). Positions 266-287 (LENEKTQLIQQVEQLKQEVSRL) are leucine-zipper. Residue Lys297 forms a Glycyl lysine isopeptide (Lys-Gly) (interchain with G-Cter in SUMO) linkage.

It belongs to the bZIP family. Maf subfamily. In terms of assembly, homodimer or heterodimer with other bHLH-Zip transcription factors. Forms homodimers and heterodimers with FOS, FOSB and FOSL2, but not with JUN proteins (JUN, JUNB and JUND). Interacts with the intracellular cytoplasmic domain of LRP1 (LRPICD); the interaction results in a moderate reduction of MAFB transcriptional potential. Binds DNA as a homodimer or a heterodimer. Interacts with PAX6; the interaction is direct. Interacts with ETS1 and LRP1. In terms of processing, sumoylated. Sumoylation on Lys-32 and Lys-297 stimulates its transcriptional repression activity and promotes macrophage differentiation from myeloid progenitors. Expressed in pancreatic alpha-cells (glucagon-positive cells), in podocytes of the kidney and macrophages (at protein level). Most abundant in kidney, gut, lung and brain.

It localises to the nucleus. Its function is as follows. Acts as a transcriptional activator or repressor. Plays a pivotal role in regulating lineage-specific hematopoiesis by repressing ETS1-mediated transcription of erythroid-specific genes in myeloid cells. Required for monocytic, macrophage, osteoclast, podocyte and islet beta cell differentiation. Involved in renal tubule survival and F4/80 maturation. Activates the insulin and glucagon promoters. Together with PAX6, transactivates weakly the glucagon gene promoter through the G1 element. SUMO modification controls its transcriptional activity and ability to specify macrophage fate. Binds element G1 on the glucagon promoter. Involved either as an oncogene or as a tumor suppressor, depending on the cell context. Required for the transcriptional activation of HOXB3 in the rhombomere r5 in the hindbrain. This chain is Transcription factor MafB (Mafb), found in Mus musculus (Mouse).